The following is a 316-amino-acid chain: Carbamate kinase-like protein YahI (316 aa).

Belongs to the carbamate kinase family.

The sequence is that of Carbamate kinase-like protein YahI (yahI) from Escherichia coli (strain K12).